A 159-amino-acid polypeptide reads, in one-letter code: Ribosomal RNA large subunit methyltransferase H (159 aa).

Residues leucine 76, glycine 108, and 127–132 (FSKMTF) each bind S-adenosyl-L-methionine.

It belongs to the RNA methyltransferase RlmH family. Homodimer.

It is found in the cytoplasm. The catalysed reaction is pseudouridine(1915) in 23S rRNA + S-adenosyl-L-methionine = N(3)-methylpseudouridine(1915) in 23S rRNA + S-adenosyl-L-homocysteine + H(+). Its function is as follows. Specifically methylates the pseudouridine at position 1915 (m3Psi1915) in 23S rRNA. The chain is Ribosomal RNA large subunit methyltransferase H from Oceanobacillus iheyensis (strain DSM 14371 / CIP 107618 / JCM 11309 / KCTC 3954 / HTE831).